The sequence spans 243 residues: Uridylate kinase (243 aa).

15–18 (KMSG) is a binding site for ATP. Gly-57 lines the UMP pocket. ATP is bound by residues Gly-58 and Arg-62. UMP contacts are provided by residues Asp-77 and 138–145 (TGNPLVTT). ATP is bound by residues Thr-165, Asn-166, Tyr-171, and Asp-174.

This sequence belongs to the UMP kinase family. In terms of assembly, homohexamer.

It localises to the cytoplasm. It catalyses the reaction UMP + ATP = UDP + ADP. It participates in pyrimidine metabolism; CTP biosynthesis via de novo pathway; UDP from UMP (UMPK route): step 1/1. Inhibited by UTP. Functionally, catalyzes the reversible phosphorylation of UMP to UDP. In Coxiella burnetii (strain RSA 493 / Nine Mile phase I), this protein is Uridylate kinase.